A 494-amino-acid chain; its full sequence is Metalloprotease TIKI1 (494 aa).

The signal sequence occupies residues 1–25; sequence MTMMTMMMVSWSAFLQICWILMVRA. The Extracellular segment spans residues 26–467; the sequence is NQFNPGEPSG…QEHERANHDR (442 aa). N234 and N282 each carry an N-linked (GlcNAc...) asparagine glycan. A helical transmembrane segment spans residues 468-488; that stretch reads TFSGSSSRTGPALSALAVCVQ. Topologically, residues 489–494 are cytoplasmic; it reads MLRLLL.

The protein belongs to the TIKI family. Requires Mn(2+) as cofactor. It depends on Co(2+) as a cofactor.

It is found in the cell membrane. In terms of biological role, metalloprotease that acts as a negative regulator of the Wnt signaling pathway by mediating the cleavage of the N-terminal residues of a subset of Wnt proteins. Following cleavage, Wnt proteins become oxidized and form large disulfide-bond oligomers, leading to their inactivation. This is Metalloprotease TIKI1 (trabd2a) from Danio rerio (Zebrafish).